The chain runs to 445 residues: Crotonyl-CoA reductase (445 aa).

Zn(2+) is bound at residue E149.

The protein belongs to the zinc-containing alcohol dehydrogenase family. Crotonyl-CoA carboxylase/reductase subfamily. Homodimer. Zn(2+) serves as cofactor.

It catalyses the reaction butanoyl-CoA + NADP(+) = (2E)-butenoyl-CoA + NADPH + H(+). With respect to regulation, inhibited by NADPH at concentrations above 200 uM, by MgCl (30%), by ZnCl(2) (55%), and by CoCl, MnCl and CaCl (100%). Also inhibited by iodoacetamide, N-ethylmaleamide, the thiol group inhibitor beta-chloromercuribenzoate, palmitoyl-CoA and myristoyl-CoA. In terms of biological role, catalyzes the conversion of crotonyl-CoA to butyryl-CoA. It uses only NADP as electron donor. May have a role in providing butyryl-CoA as a starter unit for straight-chain fatty acid biosynthesis. This Streptomyces avermitilis (strain ATCC 31267 / DSM 46492 / JCM 5070 / NBRC 14893 / NCIMB 12804 / NRRL 8165 / MA-4680) protein is Crotonyl-CoA reductase (ccrA2).